We begin with the raw amino-acid sequence, 918 residues long: Chaperone protein ClpC4, chloroplastic (918 aa).

Residues 266-515 (LMEYGTNLTK…RLRNAQCKPS (250 aa)) form an i region. ATP-binding positions include 311-318 (GEPGVGKT) and 653-660 (GPTGVGKS). The tract at residues 579–774 (VTEDDVRHAI…LIVMTTNIGS (196 aa)) is II.

Belongs to the ClpA/ClpB family. ClpC subfamily.

The protein localises to the plastid. It localises to the chloroplast. Its function is as follows. Molecular chaperone that may interact with a ClpP-like protease involved in degradation of denatured proteins in the chloroplast. This Oryza sativa subsp. japonica (Rice) protein is Chaperone protein ClpC4, chloroplastic (CPLC4).